Reading from the N-terminus, the 853-residue chain is DNA mismatch repair protein MutS (853 aa).

614-621 (GPNMGGKS) is an ATP binding site.

This sequence belongs to the DNA mismatch repair MutS family.

In terms of biological role, this protein is involved in the repair of mismatches in DNA. It is possible that it carries out the mismatch recognition step. This protein has a weak ATPase activity. This Citrobacter koseri (strain ATCC BAA-895 / CDC 4225-83 / SGSC4696) protein is DNA mismatch repair protein MutS.